The following is an 893-amino-acid chain: DNA endonuclease RBBP8 (893 aa).

The segment at 22-45 (ELWTKLKEYHDKEVQGLQVKVTKL) is essential for binding to the MRN complex and for RPA focus formation on DNA damage. The stretch at 35 to 84 (VQGLQVKVTKLKKERILDAQRLEEFFTKNQQLRDQQKVLQETIKILEDRL) forms a coiled coil. Residues 45-160 (LKKERILDAQ…AELACEENII (116 aa)) form a required for interaction with LMO4, probably by stabilizing the interaction through RPPB8 dimerization region. Residues Lys62 and Lys115 each participate in a glycyl lysine isopeptide (Lys-Gly) (interchain with G-Cter in SUMO2) cross-link. Positions 117-138 (ITELMNEKNTLQEENKKLSEQL) form a coiled coil. A Glycyl lysine isopeptide (Lys-Gly) (interchain with G-Cter in SUMO2) cross-link involves residue Lys193. Ser233 and Ser276 each carry phosphoserine. The segment covering 296–307 (MESARSKEDSLR) has biased composition (basic and acidic residues). A disordered region spans residues 296 to 324 (MESARSKEDSLRFSDSASKTPPQEFTTRA). Positions 308 to 324 (FSDSASKTPPQEFTTRA) are enriched in polar residues. Phosphothreonine is present on Thr315. Phosphoserine is present on residues Ser325, Ser326, and Ser348. Glycyl lysine isopeptide (Lys-Gly) (interchain with G-Cter in SUMO2) cross-links involve residues Lys359 and Lys377. At Ser378 the chain carries Phosphoserine. Glycyl lysine isopeptide (Lys-Gly) (interchain with G-Cter in SUMO2) cross-links involve residues Lys394, Lys403, Lys409, and Lys437. The PXDLS motif motif lies at 489-493 (PLDLS). The damage-recruitment motif stretch occupies residues 508–556 (NETSKNKLKQATIYEALKPIPKGSSSGRKALSGDCMPAKDSWETYCLQP). Residue Lys525 forms a Glycyl lysine isopeptide (Lys-Gly) (interchain with G-Cter in SUMO2); alternate linkage. Residues Lys529, Lys570, and Lys576 each participate in a glycyl lysine isopeptide (Lys-Gly) (interchain with G-Cter in SUMO2) cross-link. Lys602 is covalently cross-linked (Glycyl lysine isopeptide (Lys-Gly) (interchain with G-Cter in SUMO2); alternate). Glycyl lysine isopeptide (Lys-Gly) (interchain with G-Cter in SUMO2) cross-links involve residues Lys611, Lys636, and Lys638. Positions 639 to 683 (ALPSNQDTSFENIQWSVDPGADLSQYKMDVTVIDTKDSSHSRLGG) are required for interaction with LMO4, probably by making physical contact with LMO4. Ser662 carries the phosphoserine; by ATM modification. Lys674 participates in a covalent cross-link: Glycyl lysine isopeptide (Lys-Gly) (interchain with G-Cter in SUMO2). A Phosphoserine modification is found at Ser677. Lys716 is covalently cross-linked (Glycyl lysine isopeptide (Lys-Gly) (interchain with G-Cter in SUMO2)). Ser720 is subject to Phosphoserine. Ser742 carries the phosphoserine; by ATM modification. Residue Lys778 forms a Glycyl lysine isopeptide (Lys-Gly) (interchain with G-Cter in SUMO2) linkage. Residues 836 to 838 (FRY) carry the KLHL15-binding motif. Phosphothreonine occurs at positions 843 and 855. Lys865 is covalently cross-linked (Glycyl lysine isopeptide (Lys-Gly) (interchain with G-Cter in SUMO2)). The disordered stretch occupies residues 869–893 (DLSPRPKRRQPYNAVFSPKGKEQRT).

The protein belongs to the COM1/SAE2/CtIP family. In terms of assembly, homotetramer; formed by antiparallel association of helical extensions protruding from the N-termini of two parallel coiled-coil dimers. Forms a dumbbell-shaped particle in which polar globular domains are held about 30 nm apart by a central rod. Homotetramerization is required for DNA-end resection and repair. Interacts (via the PXDLS motif) with CTBP1; the interaction is disrupted via binding of the adenovirus E1A to CTBP1. Component of the BRCA1-RBBP8 complex. Interacts (the Ser-326 phosphorylated form) with BRCA1 (via the C-terminal BRCT domains): the interaction occurs in the G2 phase, ubiquitinates RBBP8 and involves RBBP8 in BRCA1-dependent G2/M checkpoint control on DNA damage. Interacts with RB1. Interacts with the MRN complex. Interacts directly with MRE11; the interaction is required for efficient homologous recombination (HR) and regulation of the MRN complex. Interacts (when phosphorylated by CDK1) with NBN; promoting association with the MRN complex. Interacts with LMO4 (via the LIM zinc-binding 1 domain). Interacts with SIAH1. Interacts with RNF138. Interacts with EXD2. Interacts with CUL3 and KLHL15; this interaction leads to RBBP8 proteasomal degradation. Directly interacts with PIN1; this interaction depends upon RBBP8 phosphorylation, predominantly at Thr-315. Interacts with FZR1; this interaction leads to APC/C-mediated RBBP8 proteasomal degradation. Interacts with AUNIP; leading to recruit RBBP8 to sites of DNA damage. Interacts with SAMHD1. Interacts with HDGFL2. Post-translationally, hyperphosphorylation upon ionizing radiation results in dissociation from BRCA1. Phosphorylation at Thr-843 by CDK1 is essential for the recruitment to DNA and the DNA repair function. Phosphorylation at Thr-843 and Thr-855 promote interaction with NBN and recruitment to double-strand breaks (DSBs). Phosphorylated on Ser-326 as cells enter G2 phase. Phosphorylated at Ser-326 as cells enter G2 phase. This phosphorylation is required for binding BRCA1 and for the G2/M DNA damage transition checkpoint control. Phosphorylation at Thr-315 is required for PIN1-binding, while phosphorylation at Ser-276 serves as a PIN1 isomerization site. Phosphorylation at Thr-315 is cell-cycle dependent. It steadily increases during S phase, peaks at late S/G2 phase, and drops at G1. Phosphorylation is not required for tetramerization. Binds to DNA more strongly when dephosphorylated. Ubiquitinated. Ubiquitination at multiple sites by BRCA1 (via its N-terminal RING domain) does not lead to its proteasomal degradation but instead the ubiquitinated RBBP8 binds to chromatin following DNA damage and may play a role in G2/M checkpoint control. Ubiquitinated by RNF138 at its N-terminus. Ubiquitinated through 'Lys-48' by the E3 CUL3-KLHL15 complex; this modification leads to proteasomal degradation. Ubiquitinated by the E3 FZR1/APC/C complex; this modification leads to proteasomal degradation.

It localises to the nucleus. The protein resides in the chromosome. Its function is as follows. Endonuclease that cooperates with the MRE11-RAD50-NBN (MRN) complex in DNA-end resection, the first step of double-strand break (DSB) repair through the homologous recombination (HR) pathway. HR is restricted to S and G2 phases of the cell cycle and preferentially repairs DSBs resulting from replication fork collapse. Key determinant of DSB repair pathway choice, as it commits cells to HR by preventing classical non-homologous end-joining (NHEJ). Specifically promotes the endonuclease activity of the MRN complex to clear DNA ends containing protein adducts: recruited to DSBs by NBN following phosphorylation by CDK1, and promotes the endonuclease activity of MRE11 to clear protein-DNA adducts and generate clean double-strand break ends. Functions downstream of the MRN complex and ATM, promotes ATR activation and its recruitment to DSBs in the S/G2 phase facilitating the generation of ssDNA. Component of the BRCA1-RBBP8 complex that regulates CHEK1 activation and controls cell cycle G2/M checkpoints on DNA damage. During immunoglobulin heavy chain class-switch recombination, promotes microhomology-mediated alternative end joining (A-NHEJ) and plays an essential role in chromosomal translocations. Binds preferentially to DNA Y-junctions and to DNA substrates with blocked ends and promotes intermolecular DNA bridging. The protein is DNA endonuclease RBBP8 (Rbbp8) of Mus musculus (Mouse).